Here is a 921-residue protein sequence, read N- to C-terminus: Probable glucan 1,3-alpha-glucosidase (921 aa).

The signal sequence occupies residues 1 to 20; that stretch reads MRSLLFVLSLICFCSQTALS. Aspartate 512 functions as the Nucleophile in the catalytic mechanism. Residue glutamate 515 is part of the active site. Aspartate 588 functions as the Proton donor in the catalytic mechanism. Asparagine 689 and asparagine 804 each carry an N-linked (GlcNAc...) asparagine glycan.

This sequence belongs to the glycosyl hydrolase 31 family. In terms of assembly, heterodimer of a catalytic alpha subunit (PSL5) and a beta subunit (PSL4). In terms of tissue distribution, expressed in roots, rosette leaves, leaf blades, mature stems, cauline leaves, flower buds, flowers and siliques.

The protein localises to the endoplasmic reticulum. It carries out the reaction Hydrolysis of terminal (1-&gt;3)-alpha-D-glucosidic links in (1-&gt;3)-alpha-D-glucans.. It participates in glycan metabolism; N-glycan metabolism. Functionally, cleaves sequentially the 2 innermost alpha-1,3-linked glucose residues from the Glc(2)Man(9)GlcNAc(2) oligosaccharide precursor of immature glycoproteins. Essential for stable accumulation of the receptor EFR that determines the specific perception of bacterial elongation factor Tu (EF-Tu), a potent elicitor of the defense response to pathogen-associated molecular patterns (PAMPs). Required for sustained activation of EFR-mediated signaling, but not receptor FLS2-mediated signaling elicited by the bacterial flagellin flg22. The sequence is that of Probable glucan 1,3-alpha-glucosidase (PSL5) from Arabidopsis thaliana (Mouse-ear cress).